The following is a 261-amino-acid chain: HLA class II histocompatibility antigen, DM alpha chain (261 aa).

An N-terminal signal peptide occupies residues 1–26; the sequence is MGHEQNQGAALLQMLPLLWLLPHSWA. The tract at residues 27–124 is alpha-1; the sequence is VPEAPTPMWP…KLDGKIPVSR (98 aa). Residues 27 to 233 are Lumenal-facing; sequence VPEAPTPMWP…PSDLLENVLC (207 aa). A glycan (N-linked (GlcNAc...) asparagine) is linked at Asn41. Disulfide bonds link Cys50-Cys105 and Cys147-Cys202. The Ig-like C1-type domain maps to 121 to 215; the sequence is PVSRGFPIAE…HEIDRYTAIA (95 aa). Residues 125-217 form an alpha-2 region; that stretch reads GFPIAEVFTL…IDRYTAIAYW (93 aa). The interval 218 to 233 is connecting peptide; sequence VPRNALPSDLLENVLC. A helical transmembrane segment spans residues 234–254; that stretch reads GVAFGLGVLGIIVGIVLIIYF. Residues 255–261 lie on the Cytoplasmic side of the membrane; it reads RKPCSGD.

Belongs to the MHC class II family. Heterodimer of an alpha chain (DMA) and a beta chain (DMB). Interacts with MHCII; this interaction mediates rapid selection of high-affinity peptides in a pH-dependent manner, with an optimum at pH 5.5.

The protein localises to the late endosome membrane. It is found in the lysosome membrane. Its function is as follows. Plays a critical role in catalyzing the release of class II-associated invariant chain peptide (CLIP) from newly synthesized MHC class II molecules and freeing the peptide binding site for acquisition of antigenic peptides. In B-cells, the interaction between HLA-DM and MHC class II molecules is regulated by HLA-DO. This chain is HLA class II histocompatibility antigen, DM alpha chain (HLA-DMA), found in Homo sapiens (Human).